Consider the following 345-residue polypeptide: tRNA N6-adenosine threonylcarbamoyltransferase (345 aa).

Residues H109 and H113 each contribute to the Fe cation site. Substrate is bound by residues 136–140, D169, G182, D186, and N284; that span reads TVSGG. D312 contacts Fe cation.

This sequence belongs to the KAE1 / TsaD family. Fe(2+) is required as a cofactor.

The protein resides in the cytoplasm. The enzyme catalyses L-threonylcarbamoyladenylate + adenosine(37) in tRNA = N(6)-L-threonylcarbamoyladenosine(37) in tRNA + AMP + H(+). Functionally, required for the formation of a threonylcarbamoyl group on adenosine at position 37 (t(6)A37) in tRNAs that read codons beginning with adenine. Is involved in the transfer of the threonylcarbamoyl moiety of threonylcarbamoyl-AMP (TC-AMP) to the N6 group of A37, together with TsaE and TsaB. TsaD likely plays a direct catalytic role in this reaction. This is tRNA N6-adenosine threonylcarbamoyltransferase from Chlorobium phaeovibrioides (strain DSM 265 / 1930) (Prosthecochloris vibrioformis (strain DSM 265)).